The primary structure comprises 396 residues: Subtilisin-like protease 5 (396 aa).

An N-terminal signal peptide occupies residues 1 to 20 (MTGFFTFLSFSLAALSVTNA). Residues 21 to 116 (AHILSVPKGA…VEPDAIISQH (96 aa)) constitute a propeptide that is removed on maturation. In terms of domain architecture, Inhibitor I9 spans 37–113 (YIVVMKDDTS…VAFVEPDAII (77 aa)). N-linked (GlcNAc...) asparagine glycosylation is present at Asn63. Positions 125-396 (PWGLSRLSNR…SRLLYNGSGR (272 aa)) constitute a Peptidase S8 domain. Residues Asp156 and His187 each act as charge relay system in the active site. N-linked (GlcNAc...) asparagine glycosylation is found at Asn230 and Asn248. Ser342 serves as the catalytic Charge relay system. Residues 376–389 (PTIRNPGPDTTSRL) are compositionally biased toward polar residues. The tract at residues 376–396 (PTIRNPGPDTTSRLLYNGSGR) is disordered. Asn392 is a glycosylation site (N-linked (GlcNAc...) asparagine).

Belongs to the peptidase S8 family.

It localises to the secreted. Functionally, secreted subtilisin-like serine protease with keratinolytic activity that contributes to pathogenicity. This chain is Subtilisin-like protease 5 (SUB5), found in Trichophyton tonsurans (Scalp ringworm fungus).